The following is a 363-amino-acid chain: Peptide chain release factor 1 (363 aa).

Glutamine 237 bears the N5-methylglutamine mark. Over residues glutamate 287–leucine 299 the composition is skewed to basic and acidic residues. The disordered stretch occupies residues glutamate 287–serine 306.

This sequence belongs to the prokaryotic/mitochondrial release factor family. Post-translationally, methylated by PrmC. Methylation increases the termination efficiency of RF1.

Its subcellular location is the cytoplasm. Peptide chain release factor 1 directs the termination of translation in response to the peptide chain termination codons UAG and UAA. This is Peptide chain release factor 1 from Ruthia magnifica subsp. Calyptogena magnifica.